The chain runs to 275 residues: MRWPPWASNTQASNNDHPTTTNNNDPKNLLDWSAFTELRTLIPTLVLTTGILSAFTLHRNYLRRFPTAVNITPAYYRRRSILGKVTSVGDGDNFRIYHTPGGRLAGWGWVPWKKVPTTRKELRDQTIHVRIAGVDAPEQAHFGRPAQPFGKEAHEWLTGYLINRRVRIYVHRQDQYQRVVATVFVRRALDFPVPFRRRDVGYEMLRKGLATVYEAKVGAEFGGEVMEKKYRSAEWWAKARGLGLWKGFKKNRDAWESPREFKTRTGMEDVGDGKK.

The tract at residues Met-1 to Asp-25 is disordered. Positions Asn-14–Asp-25 are enriched in low complexity. A helical transmembrane segment spans residues Leu-41 to Leu-57. In terms of domain architecture, TNase-like spans Arg-79–Gly-247. Residue Arg-130 is part of the active site. Ca(2+) is bound at residue Asp-135. Residues Glu-138 and Arg-178 contribute to the active site.

Belongs to the LCL3 family.

Its subcellular location is the mitochondrion. The protein resides in the membrane. The chain is Probable endonuclease lcl3 (lcl3) from Aspergillus niger (strain ATCC MYA-4892 / CBS 513.88 / FGSC A1513).